Here is a 288-residue protein sequence, read N- to C-terminus: tRNA pseudouridine synthase A (288 aa).

The Nucleophile role is filled by Asp-58. Tyr-124 contributes to the substrate binding site.

Belongs to the tRNA pseudouridine synthase TruA family. Homodimer.

It catalyses the reaction uridine(38/39/40) in tRNA = pseudouridine(38/39/40) in tRNA. In terms of biological role, formation of pseudouridine at positions 38, 39 and 40 in the anticodon stem and loop of transfer RNAs. The polypeptide is tRNA pseudouridine synthase A (Corynebacterium diphtheriae (strain ATCC 700971 / NCTC 13129 / Biotype gravis)).